The chain runs to 566 residues: Mucolipin-2 (566 aa).

Topologically, residues 1 to 65 (MARQPYRFPQ…YRARRQIPWK (65 aa)) are cytoplasmic. The chain crosses the membrane as a helical span at residues 66–86 (LGLQILKIVMVTTQLVRFGLS). Topologically, residues 87-288 (NQLVVAFKED…IFGSTQKNAQ (202 aa)) are extracellular. The segment at 107–123 (KGYSGTDEDDYSCSVYT) is extracellular/lumenal pore loop. Cystine bridges form between C164/C190 and C243/C274. A helical transmembrane segment spans residues 289-309 (YVLVFDAFVIVICLASLILCT). Residues 310-346 (RSIVLALRLRKRFLNFFLEKYKRPVCDTDQWEFINGW) are Cytoplasmic-facing. Residues 347–367 (YVLVIISDLMTIIGSILKMEI) form a helical membrane-spanning segment. Over 368–376 (KAKNLTNYD) the chain is Extracellular. The helical transmembrane segment at 377–397 (LCSIFLGTSTLLVWVGVIRYL) threads the bilayer. Topologically, residues 398 to 419 (GYFQAYNVLILTMQASLPKVLR) are cytoplasmic. Residues 420–440 (FCACAGMIYLGYTFCGWIVLG) form a helical membrane-spanning segment. Over 441 to 448 (PYHDKFEN) the chain is Extracellular. An intramembrane region (pore-forming) is located at residues 449 to 469 (LNTVAECLFSLVNGDDMFATF). Residues 461-464 (NGDD) carry the Selectivity filter motif. At 470–480 (AQIQQKSILVW) the chain is on the extracellular side. The helical transmembrane segment at 481–502 (LFSRLYLYSFISLFIYMILSLF) threads the bilayer. Residues 503–566 (IALITDSYDT…RSDDHLIPIS (64 aa)) lie on the Cytoplasmic side of the membrane.

Belongs to the transient receptor (TC 1.A.4) family. Polycystin subfamily. MCOLN2 sub-subfamily. In terms of assembly, forms homooligomeric complexes; probably tetrameric. Can heterooligomerize with MCOLN1; heteromeric assemblies have different channel properties as compared to the respective homooligomers and may be tissue-specific. Interacts with TMEM176A.

It is found in the cell membrane. The protein resides in the late endosome membrane. The protein localises to the lysosome membrane. It localises to the recycling endosome membrane. It catalyses the reaction Ca(2+)(in) = Ca(2+)(out). It carries out the reaction Fe(2+)(in) = Fe(2+)(out). With respect to regulation, channel activity is reduced by low extracellular/lumenal pH level. Nonselective cation channel probably playing a role in the regulation of membrane trafficking events. Acts as a Ca(2+)-permeable cation channel with inwardly rectifying activity. May activate ARF6 and be involved in the trafficking of GPI-anchored cargo proteins to the cell surface via the ARF6-regulated recycling pathway. May play a role in immune processes. In adaptive immunity, TRPML2 and TRPML1 may play redundant roles in the function of the specialized lysosomes of B cells. In the innate immune response, may play a role in the regulation of chemokine secretion and macrophage migration. Through a possible and probably tissue-specific heteromerization with MCOLN1 may be at least in part involved in many lysosome-dependent cellular events. Also functions as a Fe(2+) permeable channel. This Homo sapiens (Human) protein is Mucolipin-2.